The chain runs to 258 residues: Serine/arginine-rich splicing factor x16 (258 aa).

Positions 8–81 (RKVYVGDLGN…RRARVELSTG (74 aa)) constitute an RRM domain. Disordered regions lie at residues 81–113 (GKYARSGGGGGGGGGGGGGGGLGGRDRGGGGRG) and 130–258 (CRER…VSRD). The span at 86-103 (SGGGGGGGGGGGGGGGLG) shows a compositional bias: gly residues. The segment covering 104–113 (GRDRGGGGRG) has biased composition (basic and acidic residues). The segment at 116-132 (KCYECGGRGHFARHCRE) adopts a CCHC-type zinc-finger fold. Basic residues-rich tracts occupy residues 130–141 (CRERKARQRRRS) and 149–166 (STSRRRRTRSKSGTRSRS). Composition is skewed to basic and acidic residues over residues 180–197 (NGRDENGSASRYSDHERN) and 210–221 (RRYEDEDDDRVR). Composition is skewed to low complexity over residues 231-240 (RSASPAVRRG) and 249-258 (SSASRSVSRD).

Interacts (via Arg/Ser-rich region) with Alsin2/CG7564, Rbp1 and Doa (via N-terminus). In terms of processing, highly phosphorylated. May be phosphorylated by the serine/threonine-protein kinase Doa.

Its subcellular location is the nucleus. Serine/arginine-rich splicing factor (SR protein) involved in differential exon usage during RNA transcript processing, probably by binding exonic splicing enhancer elements and recruiting components of the splicing machinery. Binds RNA stem-loop structures with consensus sequence 5'-CCGUNUNKNW-3'. Regulator of genes involved in lipid and carbohydrate metabolism, the immune response and the response to xenobiotics. The chain is Serine/arginine-rich splicing factor x16 from Drosophila melanogaster (Fruit fly).